The sequence spans 303 residues: Probable cat1 operon transcriptional activator (303 aa).

In terms of domain architecture, HTH lysR-type spans 1-58 (MDLRQFRYFVAVARERNFTRAARQLNIAQPPLSRQIQLLEEEVGVPLLIRNSRPVQLT). Residues 18–37 (FTRAARQLNIAQPPLSRQIQ) constitute a DNA-binding region (H-T-H motif).

The protein belongs to the LysR transcriptional regulatory family.

Functionally, probable positive regulator of the cat1 operon which encode enzymes responsible for the degradation of catechol to acetyl-CoA via the beta-ketoadipate pathway. The chain is Probable cat1 operon transcriptional activator from Acinetobacter lwoffii.